The following is a 1084-amino-acid chain: CRISPR-associated endonuclease Cas9 (1084 aa).

The For RuvC-like nuclease domain role is filled by Asp-8. Positions 8, 496, and 500 each coordinate Mn(2+). The HNH Cas9-type domain maps to 504-665; it reads TEKRAREMDG…MDEEIDARSM (162 aa). Catalysis depends on His-573, which acts as the Proton acceptor for HNH nuclease domain. His-727 serves as a coordination point for Mn(2+).

This sequence belongs to the CRISPR-associated protein Cas9 family. Subtype II-C subfamily. Monomer. Binds crRNA and tracrRNA. It depends on Mg(2+) as a cofactor.

CRISPR (clustered regularly interspaced short palindromic repeat) is an adaptive immune system that provides protection against mobile genetic elements (viruses, transposable elements and conjugative plasmids). CRISPR clusters contain spacers, sequences complementary to antecedent mobile elements, and target invading nucleic acids. CRISPR clusters are transcribed and processed into CRISPR RNA (crRNA). In type II CRISPR systems correct processing of pre-crRNA requires a trans-encoded small RNA (tracrRNA), endogenous ribonuclease 3 (rnc) and this protein. The tracrRNA serves as a guide for ribonuclease 3-aided processing of pre-crRNA. Subsequently Cas9/crRNA/tracrRNA endonucleolytically cleaves linear or circular dsDNA target complementary to the spacer; Cas9 is inactive in the absence of the 2 guide RNAs (gRNA). Cas9 recognizes the protospacer adjacent motif (PAM) in the CRISPR repeat sequences to help distinguish self versus nonself, as targets within the bacterial CRISPR locus do not have PAMs. PAM recognition is also required for catalytic activity. This is CRISPR-associated endonuclease Cas9 from Corynebacterium diphtheriae (strain ATCC 700971 / NCTC 13129 / Biotype gravis).